The primary structure comprises 96 residues: MAKMMQREITKTTVNVAKMVMVDGEVQVEQLPSETFVGNLSMEQAQWRMKRKYKGEPVQVVSVEPNTEVYELPVEKFLEVATVRVEKEDSEEQVAE.

The DNA-binding element occupies 1–19 (MAKMMQREITKTTVNVAKM).

It belongs to the phi29likevirus histone-like protein p6 family. In terms of assembly, homodimer. Homomultimer. Binds to double-stranded DNA giving rise to multimeric nucleoprotein complexes. Binding specificity for the viral DNA is based on supercoiling, the viral genome having a negative superhelicity lower than that of plasmid DNA. Interacts with the DNA replication protein p17; this interaction optimizes the binding of protein p6 at the viral DNA ends, thus favoring the initiation of replication.

Functionally, histone-like nucleoprotein that binds to the viral dsDNA and responsible for wrapping and compacting the viral DNA about 4-fold. Forms a nucleoprotein complex in which the DNA adopts a right-handed toroidal conformation winding around a protein core. Binds ito most, if not all, the viral genome, although with different affinity, the highest one corresponding to the genome ends. The formation of the nucleoprotein complex at the genome ends, activates the initiation of viral DNA replication. The binding of p6 would recruit the complex formed by the TP and the DNA polymerase to the origin. Protein p6 also represses early transcription from promoter C2, and, together with protein p4, represses transcription from promoters A2b and A2c and activates late transcription from promoter A3. Protein p6 is therefore involved in the early to late transcription switch. The formation of the nucleoprotein complex at the right end of the phage genome where the early promoter C2 is located affects local topology, which may contribute to the promoter repression. The chain is Histone-like protein p6 (6) from Bacillus phage PZA (Bacteriophage PZA).